Reading from the N-terminus, the 257-residue chain is Global transcriptional regulator CodY (257 aa).

Positions 1–155 are GAF domain; it reads MSLLSKTREL…AATVIGMEIL (155 aa). The segment at residues 203-222 is a DNA-binding region (H-T-H motif); the sequence is ASKVADRVGITRSVIVNALR.

Belongs to the CodY family.

It is found in the cytoplasm. DNA-binding global transcriptional regulator which is involved in the adaptive response to starvation and acts by directly or indirectly controlling the expression of numerous genes in response to nutrient availability. During rapid exponential growth, CodY is highly active and represses genes whose products allow adaptation to nutrient depletion. The chain is Global transcriptional regulator CodY from Staphylococcus saprophyticus subsp. saprophyticus (strain ATCC 15305 / DSM 20229 / NCIMB 8711 / NCTC 7292 / S-41).